We begin with the raw amino-acid sequence, 336 residues long: Inositol 2-dehydrogenase (336 aa).

Belongs to the Gfo/Idh/MocA family. As to quaternary structure, homotetramer.

It carries out the reaction myo-inositol + NAD(+) = scyllo-inosose + NADH + H(+). Its function is as follows. Involved in the oxidation of myo-inositol (MI) to 2-keto-myo-inositol (2KMI or 2-inosose). This is Inositol 2-dehydrogenase from Paracoccus denitrificans (strain Pd 1222).